We begin with the raw amino-acid sequence, 310 residues long: Olfactory receptor 2A7 (310 aa).

Residues 1 to 24 (MGDNITSITEFLLLGFPVGPRIQM) are Extracellular-facing. N-linked (GlcNAc...) asparagine glycosylation occurs at Asn-4. Residues 25–48 (LLFGLFSLFYVFTLLGNGTILGLI) traverse the membrane as a helical segment. Over 49 to 56 (SLDSRLHA) the chain is Cytoplasmic. The chain crosses the membrane as a helical span at residues 57–78 (PMYFFLSHLAVVDIAYACNTVP). At 79–99 (RMLVNLLHPAKPISFAGRMMQ) the chain is on the extracellular side. Residues 100 to 119 (TFLFSTFAVTECLLLVVMSY) traverse the membrane as a helical segment. Over 120–138 (DLYVAICHPLRYLAIMTWR) the chain is Cytoplasmic. Residues 139–157 (VCITLAVTSWTTGVLLSLI) form a helical membrane-spanning segment. Over 158 to 194 (HLVLLLPLPFCRPQKIYHFFCEILAVLKLACADTHIN) the chain is Extracellular. A helical membrane pass occupies residues 195–218 (ENMVLAGAISGLVGPLSTIVVSYM). Residues 219–235 (CILCAILQIQSREVQRK) are Cytoplasmic-facing. Residues 236–258 (AFCTCFSHLCVIGLFYGTAIIMY) traverse the membrane as a helical segment. The Extracellular portion of the chain corresponds to 259–271 (VGPRYGNPKEQKK). The chain crosses the membrane as a helical span at residues 272–291 (YLLLFHSLFNPMLNPLICSL). Over 292–310 (RNSEVKNTLKRVLGVERAL) the chain is Cytoplasmic.

This sequence belongs to the G-protein coupled receptor 1 family.

Its subcellular location is the cell membrane. Functionally, odorant receptor. In Homo sapiens (Human), this protein is Olfactory receptor 2A7 (OR2A7).